The primary structure comprises 36 residues: MTTFDFPSVLVPLVGLIFPAMAMASLFLHVQNNKTV.

The helical transmembrane segment at 8–28 (SVLVPLVGLIFPAMAMASLFL) threads the bilayer.

Belongs to the PsaI family.

Its subcellular location is the plastid. The protein resides in the chloroplast thylakoid membrane. May help in the organization of the PsaL subunit. This is Photosystem I reaction center subunit VIII from Daucus carota (Wild carrot).